The following is a 155-amino-acid chain: SsrA-binding protein (155 aa).

It belongs to the SmpB family.

It localises to the cytoplasm. Functionally, required for rescue of stalled ribosomes mediated by trans-translation. Binds to transfer-messenger RNA (tmRNA), required for stable association of tmRNA with ribosomes. tmRNA and SmpB together mimic tRNA shape, replacing the anticodon stem-loop with SmpB. tmRNA is encoded by the ssrA gene; the 2 termini fold to resemble tRNA(Ala) and it encodes a 'tag peptide', a short internal open reading frame. During trans-translation Ala-aminoacylated tmRNA acts like a tRNA, entering the A-site of stalled ribosomes, displacing the stalled mRNA. The ribosome then switches to translate the ORF on the tmRNA; the nascent peptide is terminated with the 'tag peptide' encoded by the tmRNA and targeted for degradation. The ribosome is freed to recommence translation, which seems to be the essential function of trans-translation. The protein is SsrA-binding protein of Streptococcus pneumoniae serotype 4 (strain ATCC BAA-334 / TIGR4).